A 1000-amino-acid chain; its full sequence is UPF0182 protein SCO5204 (1000 aa).

7 consecutive transmembrane segments (helical) span residues 26–48, 70–92, 121–143, 177–199, 220–237, 267–289, and 296–318; these read LLLT…GFWT, IGLF…WLAH, WLLL…GQWR, FLLG…THYL, LSVL…AYWL, LPAK…ATLW, and PVIG…PALV. Disordered stretches follow at residues 884 to 908 and 943 to 1000; these read AETE…NPTV and EALQ…ADTG. Residues 888–897 are compositionally biased toward acidic residues; it reads QPPDEGDDTT. Composition is skewed to basic and acidic residues over residues 943-953 and 963-984; these read EALQRAEDAQA and NGDD…DKAG.

Belongs to the UPF0182 family.

Its subcellular location is the cell membrane. The protein is UPF0182 protein SCO5204 of Streptomyces coelicolor (strain ATCC BAA-471 / A3(2) / M145).